Reading from the N-terminus, the 455-residue chain is Phosphoglucosamine mutase (455 aa).

Catalysis depends on serine 107, which acts as the Phosphoserine intermediate. Residues serine 107, aspartate 247, aspartate 249, and aspartate 251 each coordinate Mg(2+). The residue at position 107 (serine 107) is a Phosphoserine.

This sequence belongs to the phosphohexose mutase family. The cofactor is Mg(2+). In terms of processing, activated by phosphorylation.

It carries out the reaction alpha-D-glucosamine 1-phosphate = D-glucosamine 6-phosphate. Functionally, catalyzes the conversion of glucosamine-6-phosphate to glucosamine-1-phosphate. The chain is Phosphoglucosamine mutase from Leuconostoc citreum (strain KM20).